The chain runs to 581 residues: Arginine--tRNA ligase (581 aa).

Positions 126–136 (PNLAKEMHVGH) match the 'HIGH' region motif.

This sequence belongs to the class-I aminoacyl-tRNA synthetase family. Monomer.

It is found in the cytoplasm. The catalysed reaction is tRNA(Arg) + L-arginine + ATP = L-arginyl-tRNA(Arg) + AMP + diphosphate. The chain is Arginine--tRNA ligase from Shewanella sp. (strain MR-4).